Here is a 518-residue protein sequence, read N- to C-terminus: Putative cytochrome P450 CYP13A6 (518 aa).

C463 is a heme binding site.

This sequence belongs to the cytochrome P450 family. Heme is required as a cofactor.

Functionally, cytochromes P450 are a group of heme-thiolate monooxygenases. They oxidize a variety of structurally unrelated compounds, including steroids, fatty acids, and xenobiotics. The protein is Putative cytochrome P450 CYP13A6 (cyp-13A6) of Caenorhabditis elegans.